The chain runs to 442 residues: GTPase HflX (442 aa).

The region spanning 186-362 (VLVALAGYTN…ALNRVVLKLP (177 aa)) is the Hflx-type G domain. GTP contacts are provided by residues 192-199 (GYTNAGKS), 217-221 (FTTLD), 238-241 (DTVG), 306-309 (NKID), and 341-343 (SAR). Residues serine 199 and threonine 219 each coordinate Mg(2+).

Belongs to the TRAFAC class OBG-HflX-like GTPase superfamily. HflX GTPase family. In terms of assembly, monomer. Associates with the 50S ribosomal subunit. The cofactor is Mg(2+).

The protein resides in the cytoplasm. Its function is as follows. GTPase that associates with the 50S ribosomal subunit and may have a role during protein synthesis or ribosome biogenesis. The protein is GTPase HflX of Thermococcus kodakarensis (strain ATCC BAA-918 / JCM 12380 / KOD1) (Pyrococcus kodakaraensis (strain KOD1)).